Here is a 74-residue protein sequence, read N- to C-terminus: Male-specific sperm protein Mst84Db (74 aa).

Belongs to the MST(3)CGP family. Testis.

The chain is Male-specific sperm protein Mst84Db (Mst84Db) from Drosophila melanogaster (Fruit fly).